The primary structure comprises 809 residues: Cyclic nucleotide-gated channel beta-3 (809 aa).

Disordered regions lie at residues 1-121 (MFKS…PPAA) and 153-178 (GDLSSPEASPQTAKPTAVPPVKESDD). Residues 1–218 (MFKSLTKVNK…SIDSYTDRLY (218 aa)) lie on the Cytoplasmic side of the membrane. The span at 22 to 31 (QSSRRNEEGS) shows a compositional bias: basic and acidic residues. The span at 32-43 (HPSNQSQQTTAQ) shows a compositional bias: polar residues. Positions 44-53 (EENKGEEKSL) are enriched in basic and acidic residues. Residues 55-88 (TKSTPVTSEEPHTNIQDKLSKKNSSGDLTTNPDP) show a composition bias toward polar residues. Residues 219–242 (LLWLLLVTLAYNWNCCFIPLRLVF) traverse the membrane as a helical segment. Topologically, residues 243 to 249 (PYQTADN) are extracellular. The chain crosses the membrane as a helical span at residues 250–270 (IHYWLIADIICDIIYLYDMLF). The Cytoplasmic portion of the chain corresponds to 271–299 (IQPRLQFVRGGDIIVDSNELRKHYRTSTK). The helical transmembrane segment at 300–317 (FQLDVASIIPFDICYLFF) threads the bilayer. Topologically, residues 318–320 (GFN) are extracellular. The helical transmembrane segment at 321 to 335 (PMFRANRMLKYTSFF) threads the bilayer. Residues 336–348 (EFNHHLESIMDKA) lie on the Cytoplasmic side of the membrane. Residues 348 to 447 (AYIYRVIRTT…IGQMRDVIGA (100 aa)) are ion conduction pathway. The helical transmembrane segment at 349–371 (YIYRVIRTTGYLLFILHINACVY) threads the bilayer. At 372-393 (YWASNYEGIGTTRWVYDGEGNE) the chain is on the extracellular side. A run of 2 helical transmembrane segments spans residues 394–420 (YLRCYYWAVRTLITIGGLPEPQTLFEI) and 421–445 (VFQLLNFFSGVFVFSSLIGQMRDVI). Residues 407-410 (TIGG) are selectivity filter. Residues 446–809 (GAATANQNYF…TIEVKEKAKQ (364 aa)) are Cytoplasmic-facing. Positions 450 to 526 (ANQNYFRACM…SIISKVDLFK (77 aa)) are C-linker. The segment at 530 to 646 (TQMIYDMLLR…ILMKKARVLL (117 aa)) is cyclic nucleotide-binding domain. Residues Gly-591, Glu-592, Arg-604, and Thr-605 each coordinate 3',5'-cyclic GMP. The interval 698-776 (QAAQKKENSE…PHSVRRTVLP (79 aa)) is disordered. Over residues 716 to 755 (NEDKQKENEDKQKENEDKGKENEDKDKGREPEEKPLDRPE) the composition is skewed to basic and acidic residues.

Belongs to the cyclic nucleotide-gated cation channel (TC 1.A.1.5) family. CNGB3 subfamily. In terms of assembly, forms heterotetrameric channels composed of CNGA3 and CNGB3 subunits with 3:1 stoichiometry. Expressed specifically in the retina.

It localises to the cell membrane. The enzyme catalyses Ca(2+)(in) = Ca(2+)(out). It catalyses the reaction Na(+)(in) = Na(+)(out). The catalysed reaction is K(+)(in) = K(+)(out). It carries out the reaction NH4(+)(in) = NH4(+)(out). The enzyme catalyses Rb(+)(in) = Rb(+)(out). It catalyses the reaction Li(+)(in) = Li(+)(out). The catalysed reaction is Cs(+)(in) = Cs(+)(out). Its function is as follows. Pore-forming subunit of the cone cyclic nucleotide-gated channel. Mediates cone photoresponses at bright light converting transient changes in intracellular cGMP levels into electrical signals. In the dark, cGMP levels are high and keep the channel open enabling a steady inward current carried by Na(+) and Ca(2+) ions that leads to membrane depolarization and neurotransmitter release from synaptic terminals. Upon photon absorption cGMP levels decline leading to channel closure and membrane hyperpolarization that ultimately slows neurotransmitter release and signals the presence of light, the end point of the phototransduction cascade. Conducts cGMP- and cAMP-gated ion currents, with permeability for monovalent and divalent cations. The polypeptide is Cyclic nucleotide-gated channel beta-3 (Homo sapiens (Human)).